A 335-amino-acid chain; its full sequence is Ketol-acid reductoisomerase (NAD(P)(+)) (335 aa).

A KARI N-terminal Rossmann domain is found at 2-182 (AKIYKDEDIS…GCARAGVIES (181 aa)). Residues 25 to 28 (YGSQ), R49, S53, and 83 to 86 (DMVQ) contribute to the NADP(+) site. H108 is a catalytic residue. Residue G134 participates in NADP(+) binding. The KARI C-terminal knotted domain maps to 183–328 (TFKEETETDL…RKLREMMFRG (146 aa)). D191, E195, E227, and E231 together coordinate Mg(2+). S252 contributes to the substrate binding site.

The protein belongs to the ketol-acid reductoisomerase family. Homodimer. Mg(2+) is required as a cofactor.

The enzyme catalyses (2R)-2,3-dihydroxy-3-methylbutanoate + NAD(+) = (2S)-2-acetolactate + NADH + H(+). It catalyses the reaction (2R)-2,3-dihydroxy-3-methylbutanoate + NADP(+) = (2S)-2-acetolactate + NADPH + H(+). The protein operates within amino-acid biosynthesis; L-isoleucine biosynthesis; L-isoleucine from 2-oxobutanoate: step 2/4. Its pathway is amino-acid biosynthesis; L-valine biosynthesis; L-valine from pyruvate: step 2/4. Its function is as follows. Involved in the biosynthesis of branched-chain amino acids (BCAA). Catalyzes an alkyl-migration followed by a ketol-acid reduction of (S)-2-acetolactate (S2AL) to yield (R)-2,3-dihydroxy-isovalerate. In the isomerase reaction, S2AL is rearranged via a Mg-dependent methyl migration to produce 3-hydroxy-3-methyl-2-ketobutyrate (HMKB). In the reductase reaction, this 2-ketoacid undergoes a metal-dependent reduction by NADPH or NADH to yield (R)-2,3-dihydroxy-isovalerate. This is Ketol-acid reductoisomerase (NAD(P)(+)) from Ignisphaera aggregans (strain DSM 17230 / JCM 13409 / AQ1.S1).